The chain runs to 165 residues: Large ribosomal subunit protein eL15 (165 aa).

The disordered stretch occupies residues Thr126 to Gly147. Residues Arg130 to His143 show a composition bias toward basic residues.

The protein belongs to the eukaryotic ribosomal protein eL15 family. As to quaternary structure, component of the large ribosomal subunit.

Its subcellular location is the cytoplasm. Component of the large ribosomal subunit. The ribosome is a large ribonucleoprotein complex responsible for the synthesis of proteins in the cell. The chain is Large ribosomal subunit protein eL15 (RPL15) from Gallus gallus (Chicken).